The following is a 160-amino-acid chain: Cyclic pyranopterin monophosphate synthase (160 aa).

Substrate-binding positions include Leu74–His76 and Met112–Glu113. Asp127 is a catalytic residue.

It belongs to the MoaC family. In terms of assembly, homohexamer; trimer of dimers.

It carries out the reaction (8S)-3',8-cyclo-7,8-dihydroguanosine 5'-triphosphate = cyclic pyranopterin phosphate + diphosphate. The protein operates within cofactor biosynthesis; molybdopterin biosynthesis. Functionally, catalyzes the conversion of (8S)-3',8-cyclo-7,8-dihydroguanosine 5'-triphosphate to cyclic pyranopterin monophosphate (cPMP). The protein is Cyclic pyranopterin monophosphate synthase of Pelobacter propionicus (strain DSM 2379 / NBRC 103807 / OttBd1).